Here is a 184-residue protein sequence, read N- to C-terminus: Photosystem I assembly protein Ycf4 (184 aa).

Transmembrane regions (helical) follow at residues 22-42 (LCWA…GFSS) and 64-84 (IVMC…WCTI).

This sequence belongs to the Ycf4 family.

It is found in the plastid. The protein localises to the chloroplast thylakoid membrane. In terms of biological role, seems to be required for the assembly of the photosystem I complex. This is Photosystem I assembly protein Ycf4 from Angiopteris evecta (Mule's foot fern).